The chain runs to 451 residues: UDP-N-acetylmuramoylalanine--D-glutamate ligase (451 aa).

An ATP-binding site is contributed by 119–125 (GSNGKTT).

The protein belongs to the MurCDEF family.

It is found in the cytoplasm. It catalyses the reaction UDP-N-acetyl-alpha-D-muramoyl-L-alanine + D-glutamate + ATP = UDP-N-acetyl-alpha-D-muramoyl-L-alanyl-D-glutamate + ADP + phosphate + H(+). The protein operates within cell wall biogenesis; peptidoglycan biosynthesis. Its function is as follows. Cell wall formation. Catalyzes the addition of glutamate to the nucleotide precursor UDP-N-acetylmuramoyl-L-alanine (UMA). The chain is UDP-N-acetylmuramoylalanine--D-glutamate ligase from Geobacillus kaustophilus (strain HTA426).